Consider the following 183-residue polypeptide: Dual-action ribosomal maturation protein DarP (183 aa).

A disordered region spans residues 1–27 (MSSHSQEPVGEENFDDSEYDRPNKSQV). A compositionally biased stretch (acidic residues) spans 9 to 18 (VGEENFDDSE).

Belongs to the DarP family.

The protein resides in the cytoplasm. In terms of biological role, member of a network of 50S ribosomal subunit biogenesis factors which assembles along the 30S-50S interface, preventing incorrect 23S rRNA structures from forming. Promotes peptidyl transferase center (PTC) maturation. In Bordetella pertussis (strain Tohama I / ATCC BAA-589 / NCTC 13251), this protein is Dual-action ribosomal maturation protein DarP.